The sequence spans 78 residues: Small ribosomal subunit protein uS17 (78 aa).

The protein belongs to the universal ribosomal protein uS17 family. As to quaternary structure, part of the 30S ribosomal subunit.

One of the primary rRNA binding proteins, it binds specifically to the 5'-end of 16S ribosomal RNA. This chain is Small ribosomal subunit protein uS17, found in Sinorhizobium medicae (strain WSM419) (Ensifer medicae).